The chain runs to 117 residues: Protein Wnt-6 (117 aa).

Residue Ser1 is the site of O-palmitoleoyl serine; by PORCN attachment. Cys83 and Cys98 form a disulfide bridge. Asn84 carries N-linked (GlcNAc...) asparagine glycosylation.

It belongs to the Wnt family. Palmitoleoylation is required for efficient binding to frizzled receptors. Depalmitoleoylation leads to Wnt signaling pathway inhibition.

It localises to the secreted. It is found in the extracellular space. Its subcellular location is the extracellular matrix. Functionally, ligand for members of the frizzled family of seven transmembrane receptors. Probable developmental protein. May be a signaling molecule which affects the development of discrete regions of tissues. Is likely to signal over only few cell diameters. This chain is Protein Wnt-6 (wnt6), found in Thunnus thynnus (Atlantic bluefin tuna).